The chain runs to 25 residues: Omega conotoxin-CVIF (25 aa).

Disulfide bonds link Cys-1–Cys-16, Cys-8–Cys-20, and Cys-15–Cys-25. Cys-25 is subject to Cysteine amide.

This sequence belongs to the conotoxin O1 superfamily. Expressed by the venom duct.

It is found in the secreted. Functionally, omega-conotoxins act at presynaptic membranes, they bind and block voltage-gated calcium channels. This toxin blocks N-type calcium channels (Cav2.2/CACNA1B). It shows a higher potency when Cav2.2/CACNA1B is only expressed with the ancillary subunit CACNB3 (IC(50)=0.1 nM) than on Cav2.2/CACNA1B expressed with the ancillary subunits CACNA2D1 and CACNB3 (IC(50)=19.9 nM). The Cav2.2/CACNA1B block by this toxin is voltage-independent, whereas the recovery from toxin block is voltage-dependent. There is a low recovery at physiological membrane potential and a high recovery with hyperpolarized potential. This indicates that the toxin has a higher affinity for Cav2.2/CACNA1B in the inactivated state. It is noteworthy that ancillary subunits beta modulate recovery from this toxin block. Cav2.2/CACNA1B expressed with the ancillary subunit CACNB2a (isoform 2a) almost recover completely from this toxin block, whereas an expression with CACNB3 exhibits relatively weak recovery. Inhibition by this toxin of excitatory synaptic transmission is reversible. In vivo, when tested on rat model of persistent pain, this toxin blocks chronic pain behavior. The protein is Omega conotoxin-CVIF of Conus catus (Cat cone).